The chain runs to 420 residues: Beta-arrestin-2 (420 aa).

Position 48 is a phosphotyrosine (Tyr-48). 2 positions are modified to hydroxyproline; by PHD2: Pro-176 and Pro-181. Residues 240–409 (ADICLFSTAQ…EDFARLRLKG (170 aa)) form an interaction with TRAF6 region. Ser-360 carries the phosphoserine modification. The segment at 374–420 (PETDAPVDTNLIEFETNYATDDDIVFEDFARLRLKGLKDEDYDDQFC) is interaction with AP2B1. The residue at position 393 (Thr-393) is a Phosphothreonine. A [DE]-X(1,2)-F-X-X-[FL]-X-X-X-R motif motif is present at residues 396–406 (DIVFEDFARLR).

The protein belongs to the arrestin family. In terms of assembly, homooligomer; the self-association is mediated by InsP6-binding. Heterooligomer with ARRB1; the association is mediated by InsP6-binding. Interacts with ADRB2 and CHRM2. Interacts with PDE4A. Interacts with PDE4D. Interacts with MAPK10, MAPK1 and MAPK3. Interacts with DRD2. Interacts with FSHR. Interacts with CLTC. Interacts with HTR2C. Interacts with CRR5. Interacts with CXCR4. Interacts with SRC. Interacts with DUSP16; the interaction is interrupted by stimulation of AGTR1 and activation of MAPK10. Interacts with CHUK; the interaction is enhanced stimulation of ADRB2. Interacts with RELA. Interacts with MDM2; the interaction is enhanced by activation of GPCRs. Interacts with SLC9A5. Interacts with TRAF6. Interacts with IGF1R. Interacts with ENG. Interacts with KIR2DL1, KIR2DL3 and KIR2DL4. Interacts with LDLR. Interacts with AP2B1. Interacts with C5AR1. Interacts with RAF1. Interacts with MAP2K1. Interacts with MAPK1. Interacts with MAPK10; the interaction enhances MAPK10 activation by MAP3K5. Interacts with MAP2K4; the interaction is enhanced by presence of MAP3K5 and MAPK10. Interacts with MAP3K5. Interacts with AKT1. Interacts with IKBKB and MAP3K14. Interacts with SMO (activated). Interacts with GSK3A and GSK3B. Associates with protein phosphatase 2A (PP2A). Interacts with CXCR4; the interaction is dependent on C-terminal phosphorylation of CXCR4 and allows activation of MAPK1 and MAPK3. Interacts with GPR143. Interacts with HCK and CXCR1 (phosphorylated). Interacts with ACKR3 and ACKR4. Interacts with ARRDC1; the interaction is direct. Interacts with GPR61, GPR62 and GPR135. Interacts (via NACHT and LRR domains) with NLRP3; this interaction is direct and inducible by omega-3 polyunsaturated fatty acids (PUFAs). Interacts with FFAR4 (via C-terminus); this interaction is stimulated by long-chain fatty acids (LCFAs). Interacts with GPR35. Interacts with GPR84. Interacts with TIGIT; this interaction inhibits the NF-kappa-B pathway. Interacts with TGFBR3. Post-translationally, phosphorylated at Thr-382 in the cytoplasm; probably dephosphorylated at the plasma membrane. The phosphorylation does not regulate internalization and recycling of ADRB2, interaction with clathrin or AP2B1. The ubiquitination status appears to regulate the formation and trafficking of beta-arrestin-GPCR complexes and signaling. Ubiquitination appears to occur GPCR-specific. Ubiquitinated by MDM2; the ubiquitination is required for rapid internalization of ADRB2. Deubiquitinated by USP33; the deubiquitination leads to a dissociation of the beta-arrestin-GPCR complex. Stimulation of a class A GPCR, such as ADRB2, induces transient ubiquitination and subsequently promotes association with USP33. Stimulation of a class B GPCR promotes a sustained ubiquitination. Deubiquitinated by USP20; allowing USP20 to deubiquitinate TRAF6 leading to inhibition of NF-kappa-B signaling. In terms of processing, hydroxylation by PHD2 modulates the rate of internalization by slowing down recruitment to the plasma membrane and inhibiting subsequent co-internalization with class A receptors. In terms of tissue distribution, found in a variety of tissues. The short isoform is the most abundant form in all tissues.

The protein resides in the cytoplasm. The protein localises to the nucleus. Its subcellular location is the cell membrane. It localises to the membrane. It is found in the clathrin-coated pit. The protein resides in the cytoplasmic vesicle. Functions in regulating agonist-mediated G-protein coupled receptor (GPCR) signaling by mediating both receptor desensitization and resensitization processes. During homologous desensitization, beta-arrestins bind to the GPRK-phosphorylated receptor and sterically preclude its coupling to the cognate G-protein; the binding appears to require additional receptor determinants exposed only in the active receptor conformation. The beta-arrestins target many receptors for internalization by acting as endocytic adapters (CLASPs, clathrin-associated sorting proteins) and recruiting the GPRCs to the adapter protein 2 complex 2 (AP-2) in clathrin-coated pits (CCPs). However, the extent of beta-arrestin involvement appears to vary significantly depending on the receptor, agonist and cell type. Internalized arrestin-receptor complexes traffic to intracellular endosomes, where they remain uncoupled from G-proteins. Two different modes of arrestin-mediated internalization occur. Class A receptors, like ADRB2, OPRM1, ENDRA, D1AR and ADRA1B dissociate from beta-arrestin at or near the plasma membrane and undergo rapid recycling. Class B receptors, like AVPR2, AGTR1, NTSR1, TRHR and TACR1 internalize as a complex with arrestin and traffic with it to endosomal vesicles, presumably as desensitized receptors, for extended periods of time. Receptor resensitization then requires that receptor-bound arrestin is removed so that the receptor can be dephosphorylated and returned to the plasma membrane. Mediates endocytosis of CCR7 following ligation of CCL19 but not CCL21. Involved in internalization of P2RY1, P2RY4, P2RY6 and P2RY11 and ATP-stimulated internalization of P2RY2. Involved in phosphorylation-dependent internalization of OPRD1 and subsequent recycling or degradation. Involved in ubiquitination of IGF1R. Beta-arrestins function as multivalent adapter proteins that can switch the GPCR from a G-protein signaling mode that transmits short-lived signals from the plasma membrane via small molecule second messengers and ion channels to a beta-arrestin signaling mode that transmits a distinct set of signals that are initiated as the receptor internalizes and transits the intracellular compartment. Acts as a signaling scaffold for MAPK pathways such as MAPK1/3 (ERK1/2) and MAPK10 (JNK3). ERK1/2 and JNK3 activated by the beta-arrestin scaffold are largely excluded from the nucleus and confined to cytoplasmic locations such as endocytic vesicles, also called beta-arrestin signalosomes. Acts as a signaling scaffold for the AKT1 pathway. GPCRs for which the beta-arrestin-mediated signaling relies on both ARRB1 and ARRB2 (codependent regulation) include ADRB2, F2RL1 and PTH1R. For some GPCRs the beta-arrestin-mediated signaling relies on either ARRB1 or ARRB2 and is inhibited by the other respective beta-arrestin form (reciprocal regulation). Increases ERK1/2 signaling in AGTR1- and AVPR2-mediated activation (reciprocal regulation). Involved in CCR7-mediated ERK1/2 signaling involving ligand CCL19. Is involved in type-1A angiotensin II receptor/AGTR1-mediated ERK activity. Is involved in type-1A angiotensin II receptor/AGTR1-mediated MAPK10 activity. Is involved in dopamine-stimulated AKT1 activity in the striatum by disrupting the association of AKT1 with its negative regulator PP2A. Involved in AGTR1-mediated chemotaxis. Appears to function as signaling scaffold involved in regulation of MIP-1-beta-stimulated CCR5-dependent chemotaxis. Involved in attenuation of NF-kappa-B-dependent transcription in response to GPCR or cytokine stimulation by interacting with and stabilizing CHUK. Suppresses UV-induced NF-kappa-B-dependent activation by interacting with CHUK. The function is promoted by stimulation of ADRB2 and dephosphorylation of ARRB2. Involved in p53/TP53-mediated apoptosis by regulating MDM2 and reducing the MDM2-mediated degradation of p53/TP53. May serve as nuclear messenger for GPCRs. Upon stimulation of OR1D2, may be involved in regulation of gene expression during the early processes of fertilization. Also involved in regulation of receptors other than GPCRs. Involved in endocytosis of TGFBR2 and TGFBR3 and down-regulates TGF-beta signaling such as NF-kappa-B activation. Involved in endocytosis of low-density lipoprotein receptor/LDLR. Involved in endocytosis of smoothened homolog/Smo, which also requires GRK2. Involved in endocytosis of SLC9A5. Involved in endocytosis of ENG and subsequent TGF-beta-mediated ERK activation and migration of epithelial cells. Involved in Toll-like receptor and IL-1 receptor signaling through the interaction with TRAF6 which prevents TRAF6 autoubiquitination and oligomerization required for activation of NF-kappa-B and JUN. Involved in insulin resistance by acting as insulin-induced signaling scaffold for SRC, AKT1 and INSR. Involved in regulation of inhibitory signaling of natural killer cells by recruiting PTPN6 and PTPN11 to KIR2DL1. Involved in IL8-mediated granule release in neutrophils. Involved in the internalization of the atypical chemokine receptor ACKR3. Acts as an adapter protein coupling FFAR4 receptor to specific downstream signaling pathways, as well as mediating receptor endocytosis. During the activation step of NLRP3 inflammasome, directly associates with NLRP3 leading to inhibition of pro-inflammatory cytokine release and inhibition of inflammation. The sequence is that of Beta-arrestin-2 (ARRB2) from Bos taurus (Bovine).